The primary structure comprises 124 residues: MNIPQDLKYTKTHEWVKIDGNKAKVGITDFAQYEITDVVHVELPEIGKQVKKAQPAAVVESVKSAFDIYSPLSGKILEVNDSVLRSPEVINQSPYENGYLFIIEFTDEKEIADLLEADSYKNLI.

Positions 22–104 constitute a Lipoyl-binding domain; it reads KAKVGITDFA…YENGYLFIIE (83 aa). Lysine 63 is modified (N6-lipoyllysine).

It belongs to the GcvH family. As to quaternary structure, the glycine cleavage system is composed of four proteins: P, T, L and H. (R)-lipoate serves as cofactor.

Functionally, the glycine cleavage system catalyzes the degradation of glycine. The H protein shuttles the methylamine group of glycine from the P protein to the T protein. The sequence is that of Glycine cleavage system H protein from Endomicrobium trichonymphae.